The sequence spans 133 residues: Large ribosomal subunit protein uL16c (133 aa).

The protein belongs to the universal ribosomal protein uL16 family. In terms of assembly, part of the 50S ribosomal subunit.

Its subcellular location is the plastid. This chain is Large ribosomal subunit protein uL16c, found in Euglena longa (Euglenophycean alga).